Consider the following 281-residue polypeptide: Putative zinc-binding protein ORF11 (281 aa).

This chain is Putative zinc-binding protein ORF11 (ORF11), found in Ictaluridae (bullhead catfishes).